The chain runs to 411 residues: Glutamate dehydrogenase 1, mitochondrial (411 aa).

The transit peptide at 1–18 (MNALAATSRNFKQAAKLL) directs the protein to the mitochondrion. K102 is a catalytic residue.

It belongs to the Glu/Leu/Phe/Val dehydrogenases family.

Its subcellular location is the mitochondrion. It carries out the reaction L-glutamate + NAD(+) + H2O = 2-oxoglutarate + NH4(+) + NADH + H(+). The enzyme catalyses L-glutamate + NADP(+) + H2O = 2-oxoglutarate + NH4(+) + NADPH + H(+). The sequence is that of Glutamate dehydrogenase 1, mitochondrial (GDH1) from Oryza sativa subsp. indica (Rice).